Consider the following 115-residue polypeptide: NADH-ubiquinone oxidoreductase chain 3 (115 aa).

3 helical membrane-spanning segments follow: residues 3–23 (IMLT…IAFW), 55–75 (FFLV…LLPL), and 86–106 (TMLT…AYEW).

The protein belongs to the complex I subunit 3 family. In terms of assembly, core subunit of respiratory chain NADH dehydrogenase (Complex I) which is composed of 45 different subunits. Interacts with TMEM186. Interacts with TMEM242.

The protein localises to the mitochondrion inner membrane. It carries out the reaction a ubiquinone + NADH + 5 H(+)(in) = a ubiquinol + NAD(+) + 4 H(+)(out). Core subunit of the mitochondrial membrane respiratory chain NADH dehydrogenase (Complex I) which catalyzes electron transfer from NADH through the respiratory chain, using ubiquinone as an electron acceptor. Essential for the catalytic activity of complex I. This Sus scrofa (Pig) protein is NADH-ubiquinone oxidoreductase chain 3.